Reading from the N-terminus, the 1215-residue chain is RNA-dependent RNA polymerase 1 (1215 aa).

The protein belongs to the RdRP family. Cid12, hrr1 and rdp1 interact forming the RNA-directed RNA polymerase complex (RDRC). The RDRC complex interacts with the RITS complex via interaction between ago1 and hrr1. Clr4 has a role in mediating this interaction.

The protein localises to the cytoplasm. It localises to the nucleus. Its subcellular location is the chromosome. The protein resides in the telomere. It is found in the centromere. The catalysed reaction is RNA(n) + a ribonucleoside 5'-triphosphate = RNA(n+1) + diphosphate. Functionally, has a role in the RNA interference (RNAi) pathway which is important for heterochromatin formation, accurate chromosome segregation, centromere cohesion and telomere function during mitosis and meiosis. Required for both post-transcriptional and transcriptional gene silencing. Required for silencing at the centromeres and for initiation of transcriptionally silent heterochromatin at the mating type locus. Promotes histone H3 'Lys-10' methylation necessary for centromere function. Required for recruitment of swi6 and cohesin to an ectopic dg repeat. A member of the RNA-directed RNA polymerase complex (RDRC) which is involved in the generation of small interfering RNAs (siRNAs) and mediates their association with the RNA-induced transcriptional silencing (RITS) complex. RITS acts as a priming complex for dsRNA synthesis at the site of non-coding centromeric RNA. Its RNA-dependent RNA polymerase activity is critical in siRNA production necessary for heterochromatin formation. The chain is RNA-dependent RNA polymerase 1 (rdp1) from Schizosaccharomyces pombe (strain 972 / ATCC 24843) (Fission yeast).